We begin with the raw amino-acid sequence, 157 residues long: Transcription elongation factor GreA (157 aa).

The stretch at 14 to 37 (LRKELERLLKRRPLITEAIAEARE) forms a coiled coil.

The protein belongs to the GreA/GreB family.

Its function is as follows. Necessary for efficient RNA polymerase transcription elongation past template-encoded arresting sites. The arresting sites in DNA have the property of trapping a certain fraction of elongating RNA polymerases that pass through, resulting in locked ternary complexes. Cleavage of the nascent transcript by cleavage factors such as GreA or GreB allows the resumption of elongation from the new 3'terminus. GreA releases sequences of 2 to 3 nucleotides. The chain is Transcription elongation factor GreA from Vibrio vulnificus (strain CMCP6).